The sequence spans 274 residues: Formamidopyrimidine-DNA glycosylase (274 aa).

Residue Pro-2 is the Schiff-base intermediate with DNA of the active site. Residue Glu-3 is the Proton donor of the active site. Lys-58 (proton donor; for beta-elimination activity) is an active-site residue. Positions 91 and 110 each coordinate DNA. The FPG-type zinc-finger motif lies at 238–272 (QVYDKTGQECVRCGTIIEKIQLGGRGTHFCPNCQR). Arg-262 (proton donor; for delta-elimination activity) is an active-site residue.

The protein belongs to the FPG family. As to quaternary structure, monomer. Requires Zn(2+) as cofactor.

The enzyme catalyses Hydrolysis of DNA containing ring-opened 7-methylguanine residues, releasing 2,6-diamino-4-hydroxy-5-(N-methyl)formamidopyrimidine.. The catalysed reaction is 2'-deoxyribonucleotide-(2'-deoxyribose 5'-phosphate)-2'-deoxyribonucleotide-DNA = a 3'-end 2'-deoxyribonucleotide-(2,3-dehydro-2,3-deoxyribose 5'-phosphate)-DNA + a 5'-end 5'-phospho-2'-deoxyribonucleoside-DNA + H(+). In terms of biological role, involved in base excision repair of DNA damaged by oxidation or by mutagenic agents. Acts as a DNA glycosylase that recognizes and removes damaged bases. Has a preference for oxidized purines, such as 7,8-dihydro-8-oxoguanine (8-oxoG). Has AP (apurinic/apyrimidinic) lyase activity and introduces nicks in the DNA strand. Cleaves the DNA backbone by beta-delta elimination to generate a single-strand break at the site of the removed base with both 3'- and 5'-phosphates. The polypeptide is Formamidopyrimidine-DNA glycosylase (Streptococcus pneumoniae (strain ATCC BAA-255 / R6)).